The following is a 2457-amino-acid chain: MALPASLAGFRIEGTASTNQADCKFGENAGAQCLSNCIIYLMSSYFNNEAPITETHDLNKVLKFGAELDSNLRKLGLLSPGQYAQLDHVPCYVQTRKWSGFIYTSAEMFGLLGMPADISDSCITSLRDLLTANYSNTIQYILYICGQKSGAIIIQGGRYTMFDPHCLKDIPESPAHVLSTSDPDALIKYVGGVSREYTACFLYFVPGHISPKNYIMSHYKVISFSDLHGSKIILEEYDLPTTNQSFCSSPQASSSPDPEVGSLLKYMSKAKRKRYPMSCGEEWTDANKKRKESGRTPPEKMTHPLPSPDIIDLTMDDDVIDLTGDDDMEDESEGDREAEPDRSGTSLPSVTLPNLAAVDQLLNSLTLPGHVPSFPALVDTDTGESYRLTRALHQLKNVLQQVLEIGVVSDSDYTPTEALNVLNYLMAWSKQLQIKNDDIKLLINSNLQIEKLFTLLKNNLISDPNLADHVQAKVCACLPAMHANRATDLQKILLHCKNLTRALEISKSSLDIKDIITTFTESFPQDFFCVCSVEEANNLVSTVQDLKRVVSNNMALTSEQDARFKALMLSVLNNTDPPASLGPIYLETETRTPLLSSAIQEAVKAIEKDTVETLSELISNIPSENAIETTFVPPVRTLLKNVTTLLTVINACVERAEIRTPEIDSSQQQLSYIGRELSKIIDETWPERAFREPVHVLDIFQKTSSHLNDLKKKMADSESLDKILSEINQTLKAIQDKAASPALINTLSDYIKNATVLAQASDPRLVEIQSQVTTLTTSTSYIESLLQKINIRTLPEVIPQLQAATKTEQGQLSLAAMNLSLIQITNSLINEALSSIHARSHNHLSNTFFNSLNSLMGLADIPGREDLIKTMESIMAVQEELVDCDDMECVEKGLTTFKYIKSSIRQYKFDKSFKTKIYLIITSEVRDLTKIKTDKQLEAWKQDVADFTPASIDDLNLFLDKAPTKTARSYATRQLKHFRDDLIKEQEMETETTPVPSTAEIERAIDLKIKATWDKILTNLRDLTFHHIAPGDWQVLLTVFNDHKSALFTKMGGELLKALQGLTAYVDSILTPLLASQLPQGQRYVAPNSDWVETFDQNVKYYLRTFHLPRVSEQLDDLERKTLLLTKLVKFTDLSQSLIGTHLEKDWSIYQKLFNSLLTVYNDHLIKTKTEVHAFLDKIASDPLLEPQAHPDLQKITQLFTEQEIIEINTLPDIFKESIKNNEKHYIASYQTEMKVFTSMVDAALAKKTQSTTEYNTHLLKIVNNMLVQAPPYAASHPISSDAISYITSLVRDKHLLEKLSYAESLKNFNWLSRLITIILTNCHPSHKQHLQTLLDEILSREQTLTPLVALEDNANQSPTERTLQAALTTLNVERVLGRATTFQKWKSQLQELEEAVKTTTQVSLLIQTISSLHDKTVTEMDPTILSSHSQALADKLKELLALKPSLDETTMSLFHGMKAYAQFKHYFVQHYVITQPKIFDAYPLSHHGTVSSSGGHQATKFNPLMRLKAFSMVTDVKKMSVWREINTTVDPTGHTFIPAPPTPAMPPIHYNVLFSSFLQAEAINLALNSNQPPTKKFGLLPGLMDARVGVQGAMLLDNQWNDISTNSAKLLDHYVRSELTPNSLTNSQFAAMTVFAHAMAMVTPHINSTRATIFPSKAIVLNQLQFLKLCLTMWPKFSGGLLRAPSFERVVQLARATLPTLLLSAPRNTLNHFLANNYRPTDTLPNTEALLFYPNQHPLVNLEKLLLTSSPFHALSTSVLNTRISMLVWGILSLSEAVLQQLWDSLYQESATFTTYIDLLRHLSAMNHKNSTLTTSTSLPQNNGPVVYSYGHTAGTTVATLEGSHPLDDGGQNIPMTLFEFVIFAIILKLKFHVFYTQEKALVNTQLGPLHLITHALDGTGDTEPFKTYISIPPQKYNGLGNLQQFCSQDEIQIFQRQHEWLVGVTKQTSFSNEDLFIVLASADNKVLSVHTFNPPINSLESETPEIVAAPIQESWPKEITTVSFWDKPALEKSPQELITEVSLVAEIFSGSAIFNTFPPSYKMVSHTPSLHVETHQLENLSITEGTPPTSPPLPDSTTQDHMEEPDNKQAKPPYQMTSPMKENTSTSGRPARSPSPSPPVLTPIKPIIPIPQATPTMPILSPFTPRLLPAAVKKHQNGAVWGHSGSLPPTHIQSSTPGPAQNTRDSGRRQIVSPVITILPGTKAGADSAGQNTSHKDISAYSPPPASKKTDRPSDTHVTAPLFSKSKLVTPRPAAKTDTGTFGPLLGHEKPPVTDLTAPVEPGHPSKVSPIIHLKPSNTGDRDPHPISDDEDSKQPPVPDTSRDKAQSRWKTPKQRPQNIFPPPKHEDDVPVTAPQPQGRKILVGGRQLPSLVYNPPTLRDIKTGMSDDKNPEPCVKENPPGVTHDPPLRIQHMEQTVNSSKYNVLLFIEKIIKSVHDHSSYMLSTLKRIKQLYI.

Residues 1 to 234 (MALPASLAGF…SDLHGSKIIL (234 aa)) are deubiquitination activity. The Peptidase C76 domain maps to 13–224 (EGTASTNQAD…IMSHYKVISF (212 aa)). Residues C33, D163, and H165 contribute to the active site. 4 disordered regions span residues 281–350 (EEWT…LPSV), 2064–2131 (ITEG…PIIP), 2164–2360 (GHSG…PQPQ), and 2387–2407 (GMSDDKNPEPCVKENPPGVTH). Residues 293-302 (SGRTPPEKMT) show a composition bias toward basic and acidic residues. Residues 314–334 (TMDDDVIDLTGDDDMEDESEG) are compositionally biased toward acidic residues. Residues 2080–2091 (TQDHMEEPDNKQ) show a composition bias toward basic and acidic residues. The segment covering 2115–2131 (SPSPSPPVLTPIKPIIP) has biased composition (pro residues). A compositionally biased stretch (polar residues) spans 2173–2186 (HIQSSTPGPAQNTR). The span at 2387–2398 (GMSDDKNPEPCV) shows a compositional bias: basic and acidic residues.

It belongs to the herpesviridae large tegument protein family. In terms of assembly, interacts with host CUL1 and CUL4A; these interactions inhibit the E3 ligase activity of cullins. Interacts with inner tegument protein. Interacts with capsid vertex specific component CVC2. Interacts with the major capsid protein/MCP.

It localises to the virion tegument. It is found in the host cytoplasm. Its subcellular location is the host nucleus. It catalyses the reaction Thiol-dependent hydrolysis of ester, thioester, amide, peptide and isopeptide bonds formed by the C-terminal Gly of ubiquitin (a 76-residue protein attached to proteins as an intracellular targeting signal).. Its function is as follows. Large tegument protein that plays multiple roles in the viral cycle. During viral entry, remains associated with the capsid while most of the tegument is detached and participates in the capsid transport toward the host nucleus. Plays a role in the routing of the capsid at the nuclear pore complex and subsequent uncoating. Within the host nucleus, acts as a deneddylase and promotes the degradation of nuclear CRLs (cullin-RING ubiquitin ligases) and thereby stabilizes nuclear CRL substrates, while cytoplasmic CRLs remain unaffected. These modifications prevent host cell cycle S-phase progression and create a favorable environment allowing efficient viral genome replication. Participates later in the secondary envelopment of capsids. Indeed, plays a linker role for the association of the outer viral tegument to the capsids together with the inner tegument protein. The polypeptide is Large tegument protein deneddylase (Apodemus sylvaticus (European woodmouse)).